The primary structure comprises 326 residues: Tryptophan--tRNA ligase (326 aa).

ATP-binding positions include 11-13 and 19-20; these read QPT and GN. The short motif at 12–20 is the 'HIGH' region element; the sequence is PTGQIHLGN. An L-tryptophan-binding site is contributed by Asp-135. ATP is bound by residues 147–149, Val-186, and 195–199; these read GED and KMSKS. The short motif at 195-199 is the 'KMSKS' region element; the sequence is KMSKS.

It belongs to the class-I aminoacyl-tRNA synthetase family. As to quaternary structure, homodimer.

The protein resides in the cytoplasm. It carries out the reaction tRNA(Trp) + L-tryptophan + ATP = L-tryptophyl-tRNA(Trp) + AMP + diphosphate + H(+). In terms of biological role, catalyzes the attachment of tryptophan to tRNA(Trp). This chain is Tryptophan--tRNA ligase, found in Helicobacter pylori (strain ATCC 700392 / 26695) (Campylobacter pylori).